Reading from the N-terminus, the 176-residue chain is ATP-dependent protease subunit HslV (176 aa).

The active site involves Thr-5. 3 residues coordinate Na(+): Ser-161, Cys-164, and Thr-167.

The protein belongs to the peptidase T1B family. HslV subfamily. A double ring-shaped homohexamer of HslV is capped on each side by a ring-shaped HslU homohexamer. The assembly of the HslU/HslV complex is dependent on binding of ATP.

Its subcellular location is the cytoplasm. The catalysed reaction is ATP-dependent cleavage of peptide bonds with broad specificity.. With respect to regulation, allosterically activated by HslU binding. Functionally, protease subunit of a proteasome-like degradation complex believed to be a general protein degrading machinery. The polypeptide is ATP-dependent protease subunit HslV (Desulfitobacterium hafniense (strain Y51)).